The chain runs to 204 residues: dTTP/UTP pyrophosphatase (204 aa).

Asp-68 (proton acceptor) is an active-site residue.

Belongs to the Maf family. YhdE subfamily. A divalent metal cation serves as cofactor.

The protein localises to the cytoplasm. It catalyses the reaction dTTP + H2O = dTMP + diphosphate + H(+). The catalysed reaction is UTP + H2O = UMP + diphosphate + H(+). Its function is as follows. Nucleoside triphosphate pyrophosphatase that hydrolyzes dTTP and UTP. May have a dual role in cell division arrest and in preventing the incorporation of modified nucleotides into cellular nucleic acids. The polypeptide is dTTP/UTP pyrophosphatase (Thermotoga maritima (strain ATCC 43589 / DSM 3109 / JCM 10099 / NBRC 100826 / MSB8)).